The primary structure comprises 120 residues: Large ribosomal subunit protein uL18 (120 aa).

The protein belongs to the universal ribosomal protein uL18 family. Part of the 50S ribosomal subunit; part of the 5S rRNA/L5/L18/L25 subcomplex. Contacts the 5S and 23S rRNAs.

In terms of biological role, this is one of the proteins that bind and probably mediate the attachment of the 5S RNA into the large ribosomal subunit, where it forms part of the central protuberance. The chain is Large ribosomal subunit protein uL18 from Brevibacillus brevis (strain 47 / JCM 6285 / NBRC 100599).